We begin with the raw amino-acid sequence, 270 residues long: dTDP-6-deoxy-L-talose 4-dehydrogenase (NAD(+)) (270 aa).

Residues Tyr11 to Ile12, Asp50 to Ile51, Leu72 to Ala76, Asn87, Thr112, Tyr135, and Lys139 each bind NAD(+). Residues Thr112 and Tyr135 each coordinate substrate. The Proton acceptor role is filled by Tyr135.

The protein belongs to the NAD(P)-dependent epimerase/dehydratase family.

It carries out the reaction dTDP-6-deoxy-beta-L-talose + NAD(+) = dTDP-4-dehydro-beta-L-rhamnose + NADH + H(+). The protein operates within bacterial outer membrane biogenesis; LPS O-antigen biosynthesis. In terms of biological role, catalyzes the reduction of dTDP-6-deoxy-L-lyxo-4-hexulose to dTDP-6-deoxy-L-talose. This Aggregatibacter actinomycetemcomitans (Actinobacillus actinomycetemcomitans) protein is dTDP-6-deoxy-L-talose 4-dehydrogenase (NAD(+)) (tll).